Here is a 304-residue protein sequence, read N- to C-terminus: Non-specific ribonucleoside hydrolase RihC (304 aa).

The active site involves histidine 233.

Belongs to the IUNH family. RihC subfamily.

Functionally, hydrolyzes both purine and pyrimidine ribonucleosides with a broad-substrate specificity. In Shigella boydii serotype 4 (strain Sb227), this protein is Non-specific ribonucleoside hydrolase RihC.